Consider the following 493-residue polypeptide: Glutamyl-tRNA(Gln) amidotransferase subunit A (493 aa).

Residues K81 and S156 each act as charge relay system in the active site. Residue S180 is the Acyl-ester intermediate of the active site.

This sequence belongs to the amidase family. GatA subfamily. Heterotrimer of A, B and C subunits.

The enzyme catalyses L-glutamyl-tRNA(Gln) + L-glutamine + ATP + H2O = L-glutaminyl-tRNA(Gln) + L-glutamate + ADP + phosphate + H(+). Its function is as follows. Allows the formation of correctly charged Gln-tRNA(Gln) through the transamidation of misacylated Glu-tRNA(Gln) in organisms which lack glutaminyl-tRNA synthetase. The reaction takes place in the presence of glutamine and ATP through an activated gamma-phospho-Glu-tRNA(Gln). The chain is Glutamyl-tRNA(Gln) amidotransferase subunit A from Mycobacterium avium (strain 104).